Here is a 143-residue protein sequence, read N- to C-terminus: Endoribonuclease YbeY (143 aa).

Zn(2+)-binding residues include His-109, His-113, and His-119.

The protein belongs to the endoribonuclease YbeY family. The cofactor is Zn(2+).

The protein resides in the cytoplasm. Its function is as follows. Single strand-specific metallo-endoribonuclease involved in late-stage 70S ribosome quality control and in maturation of the 3' terminus of the 16S rRNA. The chain is Endoribonuclease YbeY from Leptospira borgpetersenii serovar Hardjo-bovis (strain JB197).